The following is a 264-amino-acid chain: S-adenosylmethionine decarboxylase proenzyme (264 aa).

Residue Ser112 is the Schiff-base intermediate with substrate; via pyruvic acid of the active site. A Pyruvic acid (Ser); by autocatalysis modification is found at Ser112. His117 serves as the catalytic Proton acceptor; for processing activity. Cys140 acts as the Proton donor; for catalytic activity in catalysis.

The protein belongs to the prokaryotic AdoMetDC family. Type 2 subfamily. Heterooctamer of four alpha and four beta chains arranged as a tetramer of alpha/beta heterodimers. It depends on pyruvate as a cofactor. Is synthesized initially as an inactive proenzyme. Formation of the active enzyme involves a self-maturation process in which the active site pyruvoyl group is generated from an internal serine residue via an autocatalytic post-translational modification. Two non-identical subunits are generated from the proenzyme in this reaction, and the pyruvate is formed at the N-terminus of the alpha chain, which is derived from the carboxyl end of the proenzyme. The post-translation cleavage follows an unusual pathway, termed non-hydrolytic serinolysis, in which the side chain hydroxyl group of the serine supplies its oxygen atom to form the C-terminus of the beta chain, while the remainder of the serine residue undergoes an oxidative deamination to produce ammonia and the pyruvoyl group blocking the N-terminus of the alpha chain.

The catalysed reaction is S-adenosyl-L-methionine + H(+) = S-adenosyl 3-(methylsulfanyl)propylamine + CO2. The protein operates within amine and polyamine biosynthesis; S-adenosylmethioninamine biosynthesis; S-adenosylmethioninamine from S-adenosyl-L-methionine: step 1/1. Functionally, catalyzes the decarboxylation of S-adenosylmethionine to S-adenosylmethioninamine (dcAdoMet), the propylamine donor required for the synthesis of the polyamines spermine and spermidine from the diamine putrescine. This is S-adenosylmethionine decarboxylase proenzyme from Shigella dysenteriae serotype 1 (strain Sd197).